The chain runs to 1247 residues: MEFIPAQTYYNRRYQPRPWTQRPTIQVIRPKPRRRRPAGQLAQLISAVSRLALRTVPQKPRRTRKIKKQKQVKQEQQSTRNQKKKAPKQKQTQKKKRPGRRERMCMKIENDCIFEVKHEGKVTGYACLVGDKVMKPAHVKGTIDNADLAKLAFKRSSKYDLECAQIPVHMKSDASKFTHEKPEGYYNWHHGAVQYSGGRFTIPTGAGKPGDSGRPIFDNKGRVVAIVLGGANEGTRTALSVVTWNKDIVTKITPEGSVEWSLALPVMCLLANTTFPCSQPPCAPCCYEKKPEETLRMLEDNVMQPGYYQLLDSALACSQHRQRRNARENFNVYKVTRPYLAHCPDCGEGHSCHSPIALERIRSEATDGTLKIQVSLQIGIKTADSHDWTKLRYMDSHTPVDADRSGLFVRTSAPCTITGTMGHFILARCPKGETLTVGFVDSRRISHTCMHPFHHEPPLIGREKFHSRPQHGKELPCSTYVHTTAATTEEIEVHMPPDTPDYTLMTQQAGNVKITVDGQTVRYKCKCDGSNEGLITTDKVINNCKVDQCHTAVTNHKKWQYNSPLTPRNSEQGDRKGKIHIPFPLVNTTCRVPKARNPTVTYGKNRVTLLLYPDHPTLLSYRAMGRIPDYHEEWITSKKEISITVPAEGLEVTWGNNDPYKYWPQLSTNGTAHGHPHEIILYYYELYPTTTIAVLAAASIVVASLVGLSLGMCICARRRCITPYELTPGATIPFLLGILCCVKTAKAASYYEAATYLWNEQQPLFWLQLLIPLSAAIVVCNCLKLLPCCCKTLTFLAVMSIGARTVSAYEHATVIPNTVGVPYKTLVSRPGYSPMVLEMELQSVTLEPTLFLDYITCEYKTITPSPYVKCCGTAECKAKNLPDYNCKVFTGVYPFMWGGAYCFCDAENTQLSEAHVEKSESCKTEFASAYRAHTASVSAKLRVFYQGNNITVSAYANGDHAVTVKDAKFVIGPLSSAWSPFDNKIVVYKGEVYNMDYPPFGAGRPGQFGDIQSRTPDSKDVYANTQLILQRPAAGAIHVPYSQAPSGFKYWLKEKGASLQHTAPFGCQIATNPVRAVNCAVGNIPVSIDIPDAAFTRVTDAPSVTDMSCEVASCTHSSDFGGAAVIKYTASKKGKCAVHSLTNAVTIREPNVDVEGTAQLQIAFSTALASAEFKVQICSTQVHCSATCHPPKDHIVNYPSPHTTLGVQDISTTAMSWVQKITGGVGLVVAIAALILIIVLCVSFSRH.

A host transcription inhibition region spans residues 36–67 (RPAGQLAQLISAVSRLALRTVPQKPRRTRKIK). Positions 53 to 103 (LRTVPQKPRRTRKIKKQKQVKQEQQSTRNQKKKAPKQKQTQKKKRPGRRER) are disordered. 2 stretches are compositionally biased toward basic residues: residues 59–71 (KPRRTRKIKKQKQ) and 81–100 (NQKKKAPKQKQTQKKKRPGR). Residues 60–98 (PRRTRKIKKQKQVKQEQQSTRNQKKKAPKQKQTQKKKRP) carry the Nuclear localization signal motif. The interval 83–113 (KKKAPKQKQTQKKKRPGRRERMCMKIENDCI) is binding to the viral RNA. A ribosome-binding region spans residues 98 to 112 (PGRRERMCMKIENDC). A disulfide bridge connects residues C112 and C127. The 149-residue stretch at 112-260 (CIFEVKHEGK…KITPEGSVEW (149 aa)) folds into the Peptidase S3 domain. H138 serves as the catalytic Charge relay system. The Nuclear export signal signature appears at 143–153 (IDNADLAKLAF). Positions 154–159 (KRSSKY) are interaction with spike glycoprotein E2. D160 acts as the Charge relay system in catalysis. The segment at 182–192 (PEGYYNWHHGA) is dimerization of the capsid protein. The active-site Charge relay system is the S212. Residues 218 to 222 (DNKGR) form a dimerization of the capsid protein region. A functions as an uncleaved signal peptide for the precursor of protein E3/E2 region spans residues 261–273 (SLALPVMCLLANT). 9 disulfide bridges follow: C268/C277, C282/C286, C285/C317, C343/C449, C346/C352, C415/C429, C477/C590, C525/C549, and C527/C544. A glycan (N-linked (GlcNAc...) asparagine; by host) is linked at N272. Topologically, residues 325–691 (NARENFNVYK…YYYELYPTTT (367 aa)) are extracellular. N-linked (GlcNAc...) asparagine; by host glycosylation occurs at N587. Residues 692–712 (IAVLAAASIVVASLVGLSLGM) form a helical membrane-spanning segment. The Cytoplasmic portion of the chain corresponds to 713 to 747 (CICARRRCITPYELTPGATIPFLLGILCCVKTAKA). Residues 715–719 (CARRR) form an interaction with the capsid protein region. S-palmitoyl cysteine; by host attachment occurs at residues C720, C740, and C741. The tract at residues 720–740 (CITPYELTPGATIPFLLGILC) is transient transmembrane before p62-6K protein processing. A disulfide bridge connects residues C720 and C741. Residues 748-762 (ASYYEAATYLWNEQQ) lie on the Extracellular side of the membrane. A helical membrane pass occupies residues 763-783 (PLFWLQLLIPLSAAIVVCNCL). At 784–787 (KLLP) the chain is on the cytoplasmic side. A helical membrane pass occupies residues 788-808 (CCCKTLTFLAVMSIGARTVSA). At 809 to 1223 (YEHATVIPNT…AMSWVQKITG (415 aa)) the chain is on the extracellular side. 4 disulfide bridges follow: C857-C922, C870-C902, C871-C904, and C876-C886. The interval 892–909 (VYPFMWGGAYCFCDAENT) is E1 fusion peptide loop. Residues N949 and N1078 are each glycosylated (N-linked (GlcNAc...) asparagine; by host). 4 disulfide bridges follow: C1067-C1079, C1109-C1184, C1114-C1188, and C1136-C1178. Residues 1224 to 1244 (GVGLVVAIAALILIIVLCVSF) form a helical membrane-spanning segment. C1241 is lipidated: S-palmitoyl cysteine; by host. Residues 1245–1247 (SRH) are Cytoplasmic-facing.

In terms of assembly, homodimer. Homomultimer. Interacts with host karyopherin KPNA4; this interaction allows the nuclear import of the viral capsid protein. Interacts with spike glycoprotein E2. Interacts with host IRAK1; the interaction leads to inhibition of IRAK1-dependent signaling. As to quaternary structure, the precursor of protein E3/E2 and E1 form a heterodimer shortly after synthesis. The precursor of protein E3/E2 and E1 form a heterodimer shortly after synthesis. Processing of the precursor of protein E3/E2 into E2 and E3 results in a heterodimer of the spike glycoproteins E2 and E1. Spike at virion surface are constituted of three E2-E1 heterodimers. After target cell attachment and endocytosis, E1 change conformation to form homotrimers. Interacts with 6K protein. In terms of assembly, interacts with spike glycoprotein E1. Processing of the precursor of protein E3/E2 into E2 and E3 results in a heterodimer of the spike glycoproteins E2 and E1. Spike at virion surface are constituted of a trimer of E2-E1 heterodimers. Interacts with 6K protein. Interacts with host MXRA8; this interaction mediates virus entry. As to quaternary structure, oligomer. Interacts with spike glycoprotein E1. Interacts with spike glycoprotein E2. In terms of processing, structural polyprotein: Specific enzymatic cleavages in vivo yield mature proteins. Capsid protein is auto-cleaved during polyprotein translation, unmasking a signal peptide at the N-terminus of the precursor of E3/E2. The remaining polyprotein is then targeted to the host endoplasmic reticulum, where host signal peptidase cleaves it into pE2, 6K and E1 proteins. pE2 is further processed to mature E3 and E2 by host furin in trans-Golgi vesicle. Post-translationally, palmitoylated via thioester bonds. These palmitoylations may induce disruption of the C-terminus transmembrane. This would result in the reorientation of E2 C-terminus from lumenal to cytoplasmic side. N-glycosylated. In terms of processing, palmitoylated via thioester bonds.

Its subcellular location is the virion. It is found in the host cytoplasm. The protein resides in the host cell membrane. It localises to the host nucleus. The protein localises to the virion membrane. Its subcellular location is the host Golgi apparatus. It is found in the host trans-Golgi network. The protein resides in the host endoplasmic reticulum. The enzyme catalyses Autocatalytic release of the core protein from the N-terminus of the togavirus structural polyprotein by hydrolysis of a -Trp-|-Ser- bond.. In terms of biological role, forms an icosahedral capsid with a T=4 symmetry composed of 240 copies of the capsid protein surrounded by a lipid membrane through which penetrate 80 spikes composed of trimers of E1-E2 heterodimers. The capsid protein binds to the viral RNA genome at a site adjacent to a ribosome binding site for viral genome translation following genome release. Possesses a protease activity that results in its autocatalytic cleavage from the nascent structural protein. Following its self-cleavage, the capsid protein transiently associates with ribosomes, and within several minutes the protein binds to viral RNA and rapidly assembles into icosahedric core particles. The resulting nucleocapsid eventually associates with the cytoplasmic domain of the spike glycoprotein E2 at the cell membrane, leading to budding and formation of mature virions. In case of infection, new virions attach to target cells and after clathrin-mediated endocytosis their membrane fuses with the host endosomal membrane. This leads to the release of the nucleocapsid into the cytoplasm, followed by an uncoating event necessary for the genomic RNA to become accessible. The uncoating might be triggered by the interaction of capsid proteins with ribosomes. Binding of ribosomes would release the genomic RNA since the same region is genomic RNA-binding and ribosome-binding. Specifically inhibits interleukin-1 receptor-associated kinase 1/IRAK1-dependent signaling during viral entry, representing a means by which the alphaviruses may evade innate immune detection and activation prior to viral gene expression. Functionally, provides the signal sequence for the translocation of the precursor of protein E3/E2 to the host endoplasmic reticulum. Furin-cleaved E3 remains associated with spike glycoprotein E1 and mediates pH protection of the latter during the transport via the secretory pathway. After virion release from the host cell, the assembly protein E3 is gradually released in the extracellular space. Plays a role in viral attachment to target host cell, by binding to the cell receptor MXRA8. Synthesized as a p62 precursor which is processed by furin at the cell membrane just before virion budding, giving rise to E2-E1 heterodimer. The p62-E1 heterodimer is stable, whereas E2-E1 is unstable and dissociate at low pH. p62 is processed at the last step, presumably to avoid E1 fusion activation before its final export to cell surface. E2 C-terminus contains a transitory transmembrane that would be disrupted by palmitoylation, resulting in reorientation of the C-terminal tail from lumenal to cytoplasmic side. This step is critical since E2 C-terminus is involved in budding by interacting with capsid proteins. This release of E2 C-terminus in cytoplasm occurs lately in protein export, and precludes premature assembly of particles at the endoplasmic reticulum membrane. Its function is as follows. Acts as a viroporin that participates in virus glycoprotein processing and transport to the plasma membrane, cell permeabilization and budding of viral particles. Disrupts the calcium homeostasis of the cell, probably at the endoplasmic reticulum level. This leads to cytoplasmic calcium elevation. Because of its lipophilic properties, the 6K protein is postulated to influence the selection of lipids that interact with the transmembrane domains of the glycoproteins, which, in turn, affects the deformability of the bilayer required for the extreme curvature that occurs as budding proceeds. Present in low amount in virions, about 3% compared to viral glycoproteins. In terms of biological role, class II viral fusion protein. Fusion activity is inactive as long as E1 is bound to E2 in mature virion. After virus attachment to target cell via host MXRA8 and endocytosis, acidification of the endosome induce dissociation of E1/E2 heterodimer and concomitant trimerization of the E1 subunits. This E1 trimer is fusion active, and promotes release of viral nucleocapsid in cytoplasm after endosome and viral membrane fusion. Efficient fusion requires the presence of cholesterol and sphingolipid in the target membrane. This is Structural polyprotein from Anopheles (Human).